Here is a 144-residue protein sequence, read N- to C-terminus: IgW chain C region, secreted form 1/3 (144 aa).

The Ig-like domain occupies 1-82 (VYNQTTAVLG…AGSRFNDRIS (82 aa)). Residues N3, N43, and N123 are each glycosylated (N-linked (GlcNAc...) asparagine). An intrachain disulfide couples C11 to C68. Residues 87–144 (KGGTINLPVPGGNTPCTCPPCSCSGCMPKLVYQTDLNVTLENGGQLQYNCHQQACKIK) are secretory tail.

In terms of tissue distribution, expressed mainly in lymphoid tissues including spleen, epigonal organ and circulating lymphocytes.

Its subcellular location is the secreted. The chain is IgW chain C region, secreted form 1/3 from Heterodontus francisci (Horn shark).